The sequence spans 343 residues: RNA 3'-terminal phosphate cyclase (343 aa).

ATP contacts are provided by residues Gln-102 and 284–288; that span reads FLGDQ. The active-site Tele-AMP-histidine intermediate is His-308.

This sequence belongs to the RNA 3'-terminal cyclase family. Type 1 subfamily.

The protein localises to the cytoplasm. The enzyme catalyses a 3'-end 3'-phospho-ribonucleotide-RNA + ATP = a 3'-end 2',3'-cyclophospho-ribonucleotide-RNA + AMP + diphosphate. Catalyzes the conversion of 3'-phosphate to a 2',3'-cyclic phosphodiester at the end of RNA. The mechanism of action of the enzyme occurs in 3 steps: (A) adenylation of the enzyme by ATP; (B) transfer of adenylate to an RNA-N3'P to produce RNA-N3'PP5'A; (C) and attack of the adjacent 2'-hydroxyl on the 3'-phosphorus in the diester linkage to produce the cyclic end product. The biological role of this enzyme is unknown but it is likely to function in some aspects of cellular RNA processing. This Thermococcus kodakarensis (strain ATCC BAA-918 / JCM 12380 / KOD1) (Pyrococcus kodakaraensis (strain KOD1)) protein is RNA 3'-terminal phosphate cyclase (rtcA).